The following is a 260-amino-acid chain: Indole-3-glycerol phosphate synthase (260 aa).

This sequence belongs to the TrpC family.

The enzyme catalyses 1-(2-carboxyphenylamino)-1-deoxy-D-ribulose 5-phosphate + H(+) = (1S,2R)-1-C-(indol-3-yl)glycerol 3-phosphate + CO2 + H2O. It functions in the pathway amino-acid biosynthesis; L-tryptophan biosynthesis; L-tryptophan from chorismate: step 4/5. The polypeptide is Indole-3-glycerol phosphate synthase (Staphylococcus saprophyticus subsp. saprophyticus (strain ATCC 15305 / DSM 20229 / NCIMB 8711 / NCTC 7292 / S-41)).